A 396-amino-acid polypeptide reads, in one-letter code: Acetylornithine aminotransferase 2 (396 aa).

Pyridoxal 5'-phosphate contacts are provided by residues 102–103 (GA) and F134. Residue R137 participates in N(2)-acetyl-L-ornithine binding. 219 to 222 (DEVQ) is a pyridoxal 5'-phosphate binding site. The residue at position 248 (K248) is an N6-(pyridoxal phosphate)lysine. Residue T276 coordinates pyridoxal 5'-phosphate.

The protein belongs to the class-III pyridoxal-phosphate-dependent aminotransferase family. ArgD subfamily. In terms of assembly, homodimer. The cofactor is pyridoxal 5'-phosphate.

The protein resides in the cytoplasm. The enzyme catalyses N(2)-acetyl-L-ornithine + 2-oxoglutarate = N-acetyl-L-glutamate 5-semialdehyde + L-glutamate. The protein operates within amino-acid biosynthesis; L-arginine biosynthesis; N(2)-acetyl-L-ornithine from L-glutamate: step 4/4. The protein is Acetylornithine aminotransferase 2 of Bordetella bronchiseptica (strain ATCC BAA-588 / NCTC 13252 / RB50) (Alcaligenes bronchisepticus).